A 336-amino-acid chain; its full sequence is Dihydroorotate dehydrogenase (quinone) (336 aa).

Residues 62–66 and Thr86 contribute to the FMN site; that span reads AGLDK. Substrate is bound at residue Lys66. Substrate is bound at residue 111–115; that stretch reads NRMGF. Asn139 and Asn172 together coordinate FMN. Residue Asn172 coordinates substrate. The Nucleophile role is filled by Ser175. Asn177 is a substrate binding site. FMN is bound by residues Lys217 and Thr245. 246–247 is a substrate binding site; it reads NT. FMN contacts are provided by residues Gly268, Gly297, and 318 to 319; that span reads YS.

This sequence belongs to the dihydroorotate dehydrogenase family. Type 2 subfamily. In terms of assembly, monomer. It depends on FMN as a cofactor.

It localises to the cell membrane. The catalysed reaction is (S)-dihydroorotate + a quinone = orotate + a quinol. It functions in the pathway pyrimidine metabolism; UMP biosynthesis via de novo pathway; orotate from (S)-dihydroorotate (quinone route): step 1/1. Functionally, catalyzes the conversion of dihydroorotate to orotate with quinone as electron acceptor. This is Dihydroorotate dehydrogenase (quinone) from Psychromonas ingrahamii (strain DSM 17664 / CCUG 51855 / 37).